Consider the following 232-residue polypeptide: Large ribosomal subunit protein uL1 (232 aa).

Belongs to the universal ribosomal protein uL1 family. Part of the 50S ribosomal subunit.

Functionally, binds directly to 23S rRNA. The L1 stalk is quite mobile in the ribosome, and is involved in E site tRNA release. In terms of biological role, protein L1 is also a translational repressor protein, it controls the translation of the L11 operon by binding to its mRNA. The sequence is that of Large ribosomal subunit protein uL1 from Clostridium novyi (strain NT).